The following is a 253-amino-acid chain: Transcriptional regulatory protein TcrA (253 aa).

The Response regulatory domain maps to 24–138 (RILVVEDEPK…ELFARLRALS (115 aa)). Aspartate 73 bears the 4-aspartylphosphate mark. Positions 146-244 (PPTLEAGDLR…IRGAGYRLRK (99 aa)) form a DNA-binding region, ompR/PhoB-type.

In terms of assembly, interacts with HK2. Post-translationally, phosphorylated by HK2.

It localises to the cytoplasm. Functionally, member of the three-protein two-component system HK1/HK2/TcrA. The chain is Transcriptional regulatory protein TcrA (tcrA) from Mycobacterium tuberculosis (strain ATCC 25618 / H37Rv).